The chain runs to 329 residues: Cysteine synthase (329 aa).

Lysine 48 carries the post-translational modification N6-(pyridoxal phosphate)lysine. Residues asparagine 78, 183–187 (GTGGT), and serine 278 each bind pyridoxal 5'-phosphate.

This sequence belongs to the cysteine synthase/cystathionine beta-synthase family. As to quaternary structure, homodimer. The cofactor is pyridoxal 5'-phosphate.

The enzyme catalyses O-acetyl-L-serine + hydrogen sulfide = L-cysteine + acetate. The protein operates within amino-acid biosynthesis; L-cysteine biosynthesis; L-cysteine from L-serine: step 2/2. Its function is as follows. Catalyzes the conversion of O-acetylserine (OAS) to cysteine through the elimination of acetate and addition of hydrogen sulfide. The chain is Cysteine synthase (srpG) from Synechococcus elongatus (strain ATCC 33912 / PCC 7942 / FACHB-805) (Anacystis nidulans R2).